Here is a 235-residue protein sequence, read N- to C-terminus: Glial cell line-derived neurotrophic factor (235 aa).

The N-terminal stretch at 1–19 (MKLWDILATCLLLLSSVST) is a signal peptide. Positions 20–87 (RPLFHKLQPS…DFIEATLGRL (68 aa)) are excised as a propeptide. 2 disordered regions span residues 34–60 (VRSESPALDPIIDSQPETSNPKQASME) and 91–137 (SDVE…RVKG). Residues 119–128 (GERKRSRGRA) are compositionally biased toward basic residues. Intrachain disulfides connect Cys142-Cys203, Cys169-Cys232, and Cys173-Cys234. N-linked (GlcNAc...) asparagine glycans are attached at residues Asn150 and Asn186.

Belongs to the TGF-beta family. GDNF subfamily. As to quaternary structure, homodimer; disulfide-linked. Interacts with GFRA1 coreceptor and RET: forms a 2:2:2 ternary complex composed of GDNF ligand, GFRA1 and RET receptor. In terms of tissue distribution, first expressed at 14 hours post-fertilization (hpf) in the ventral half of anterior somites and in intermediate mesoderm. Ventral somitic expression persists and extends more posteriorly over the next 12 hours. Expressed throughout the ventral trunk mesoderm and endoderm at 24 hpf. By 30 hpf, somitic expression ceases and by 36 hpf, expression becomes restricted to the endodermal cells forming the gut, with expression along the whole length of the developing gut tube at 72 hpf.

Its subcellular location is the secreted. Functionally, neurotrophic factor that enhances survival and morphological differentiation of dopaminergic neurons and increases their high-affinity dopamine uptake. Acts by binding to its coreceptor, GFRA1, leading to autophosphorylation and activation of the RET receptor. The protein is Glial cell line-derived neurotrophic factor of Danio rerio (Zebrafish).